Here is a 550-residue protein sequence, read N- to C-terminus: Forkhead box protein N4 (550 aa).

Residues 231–327 constitute a DNA-binding region (fork-head); sequence KPIYSYSCLI…EEMQKWKRKD (97 aa). A compositionally biased stretch (low complexity) spans 402–411; the sequence is LQNQSRLAPS. A disordered region spans residues 402-437; that stretch reads LQNQSRLAPSSPAPAQTPPLHTVPDMTNSSLPQHPA.

Isoform 1 is expressed mainly in adult thymus. Isoform 2 is detected in adult skin. Isoform 3 is expressed in adult brain and embryo. Prominent expression sites include the olfactory placode, the basal layer of the olfactory epithelium, the neuroepithelium of the developing retina, the germinal zone of the differentiated eye, regions of motoneuron development in the neural tube and periventricular regions of the brain.

It is found in the nucleus. Its function is as follows. Transcription factor essential for neural and some non-neural tissues development. Binds to an 11-bp consensus sequence containing the invariant tetranucleotide 5'-ACGC-3'. During development of the central nervous system, required to specify the amacrine and horizontal cell fates from multipotent retinal progenitors while suppressing the alternative photoreceptor cell fates. Drives commitment of p2 progenitors to the V2b interneuron fates during spinal cord neurogenesis. In development of non-neural tissues, plays an essential role in the specification of the atrioventricular canal. The chain is Forkhead box protein N4 (foxn4) from Danio rerio (Zebrafish).